A 415-amino-acid chain; its full sequence is 3-isopropylmalate dehydratase large subunit (415 aa).

[4Fe-4S] cluster contacts are provided by cysteine 295, cysteine 353, and cysteine 356.

This sequence belongs to the aconitase/IPM isomerase family. LeuC type 2 subfamily. As to quaternary structure, heterodimer of LeuC and LeuD. [4Fe-4S] cluster is required as a cofactor.

It carries out the reaction (2R,3S)-3-isopropylmalate = (2S)-2-isopropylmalate. It functions in the pathway amino-acid biosynthesis; L-leucine biosynthesis; L-leucine from 3-methyl-2-oxobutanoate: step 2/4. In terms of biological role, catalyzes the isomerization between 2-isopropylmalate and 3-isopropylmalate, via the formation of 2-isopropylmaleate. This Pyrobaculum neutrophilum (strain DSM 2338 / JCM 9278 / NBRC 100436 / V24Sta) (Thermoproteus neutrophilus) protein is 3-isopropylmalate dehydratase large subunit.